A 450-amino-acid polypeptide reads, in one-letter code: Cyclic GMP-AMP phosphodiesterase SMPDL3A (450 aa).

An N-terminal signal peptide occupies residues 1 to 22 (MARLGALVCCLLAAWHCRPGLG). Positions 42 and 44 each coordinate Zn(2+). Cys59 and Cys78 form a disulfide bridge. Asp107 provides a ligand contact to Zn(2+). His111 serves as a coordination point for ATP. N-linked (GlcNAc...) asparagine glycosylation is found at Asn124 and Asn128. Residue Asn148 coordinates Zn(2+). ATP-binding residues include Asn148 and His149. 2 N-linked (GlcNAc...) asparagine glycosylation sites follow: Asn219 and Asn235. The Zn(2+) site is built by His249, His290, and His292. Residues Asn353 and Asn370 are each glycosylated (N-linked (GlcNAc...) asparagine). 2 disulfides stabilise this stretch: Cys417–Cys421 and Cys427–Cys440.

This sequence belongs to the acid sphingomyelinase family. Monomer. Homodimer; homodimerizes following 2',3'-cGAMP-binding. Zn(2+) serves as cofactor.

It is found in the secreted. The catalysed reaction is 2',3'-cGAMP + H2O = 5'-pGpA(2'-5') + H(+). The enzyme catalyses 5'-pGpA(2'-5') + H2O = 5'-GpA(2'-5') + phosphate. It catalyses the reaction a ribonucleoside 5'-triphosphate + H2O = a ribonucleoside 5'-diphosphate + phosphate + H(+). It carries out the reaction ATP + H2O = ADP + phosphate + H(+). Its function is as follows. Cyclic-nucleotide phosphodiesterase that acts as a negative regulator of innate immunity by mediating degradation of 2',3'-cGAMP, thereby inhibiting the cGAS-STING signaling. Specifically linearizes 2',3'-cGAMP into 2'5'-bond pGpA and further hydrolyzes pGpA to produce GpA. Also has in vitro nucleotide phosphodiesterase activity with nucleoside triphosphates, such as ATP. Has in vitro activity with p-nitrophenyl-TMP. Has lower activity with nucleoside diphosphates, and no activity with nucleoside monophosphates. Has in vitro activity with CDP-choline, giving rise to CMP and phosphocholine. Has in vitro activity with CDP-ethanolamine. Does not have sphingomyelin phosphodiesterase activity. The sequence is that of Cyclic GMP-AMP phosphodiesterase SMPDL3A (SMPDL3A) from Bos taurus (Bovine).